The sequence spans 633 residues: Chaperone protein dnaK2 (633 aa).

Position 197 is a phosphothreonine; by autocatalysis (Thr-197). The segment at 600–633 (SNAASQAADGTSSESNNSTEGNDDVIDAEFTESK) is disordered. The span at 608–619 (DGTSSESNNSTE) shows a compositional bias: low complexity. Residues 620 to 633 (GNDDVIDAEFTESK) are compositionally biased toward acidic residues.

This sequence belongs to the heat shock protein 70 family.

Acts as a chaperone. This Prochlorococcus marinus (strain SARG / CCMP1375 / SS120) protein is Chaperone protein dnaK2 (dnaK2).